The following is a 634-amino-acid chain: 1,4-alpha-glucan branching enzyme GlgB (634 aa).

The active-site Nucleophile is D305. E357 serves as the catalytic Proton donor.

It belongs to the glycosyl hydrolase 13 family. GlgB subfamily. In terms of assembly, monomer.

It carries out the reaction Transfers a segment of a (1-&gt;4)-alpha-D-glucan chain to a primary hydroxy group in a similar glucan chain.. It functions in the pathway glycan biosynthesis; glycogen biosynthesis. Catalyzes the formation of the alpha-1,6-glucosidic linkages in glycogen by scission of a 1,4-alpha-linked oligosaccharide from growing alpha-1,4-glucan chains and the subsequent attachment of the oligosaccharide to the alpha-1,6 position. The sequence is that of 1,4-alpha-glucan branching enzyme GlgB from Lactiplantibacillus plantarum (strain ATCC BAA-793 / NCIMB 8826 / WCFS1) (Lactobacillus plantarum).